The primary structure comprises 263 residues: Polyglutamine-binding protein 1 (263 aa).

Positions 46 to 80 (EGLPPSWYKVFDPSCGLPYYWNVETDLVSWLSPHD) constitute a WW domain. Positions 94–263 (NNNADAEDKS…AEASRTKQQD (170 aa)) are disordered. The segment covering 99–173 (AEDKSDRNLE…DKADREEGKD (75 aa)) has biased composition (basic and acidic residues). Residues 104 to 110 (DRNLEKV) form a 1-1; approximate repeat. The 5 X 7 AA approximate tandem repeats of D-R-[NS]-H-E-K-S stretch occupies residues 104 to 138 (DRNLEKVDRNHEKSDRSHEKPDRSHEKADRNHEKN). The stretch at 111 to 117 (DRNHEKS) is one 1-2 repeat. The 1-3; approximate repeat unit spans residues 118-124 (DRSHEKP). The stretch at 125-131 (DRSHEKA) is one 1-4; approximate repeat. The 1-5; approximate repeat unit spans residues 132–138 (DRNHEKN). Repeat copies occupy residues 139–140 (DR), 141–142 (ER), 143–144 (ER), 150–151 (DR), 152–153 (ER), 154–155 (DR), 156–157 (DR), 158–159 (ER), and 160–161 (ER). The interval 139 to 144 (DRERER) is 3 X 2 AA tandem repeats of [DE]-R. The tract at residues 150 to 161 (DRERDRDRERER) is 6 X 2 AA tandem repeats of [DE]-R. Residues 243–253 (YPSPGAVLRAN) are important for interaction with TXNL4A. Residue serine 245 is modified to Phosphoserine.

As to quaternary structure, interacts with POU3F2/Brn-2, ATXN1, TXNL4A, HTT and AR. Interaction with ATXN1 correlates positively with the length of the polyglutamine tract. Interacts with RNA polymerase II large subunit in a phosphorylation-dependent manner. Forms a ternary complex with ATXN1 mutant and phosphorylated RNA polymerase II. Interacts (via C-terminus) with TXNL4A and CD2BP2. Interacts (via WW domain) with ATN1 and SF3B1, and may interact with additional splice factors. Interacts (via WW domain) with WBP11; Leading to reduce interaction between PQBP1 and TXNL4A. Interacts with CAPRIN1. Interacts with DDX1. Interacts with SFPQ. Interacts with KHSRP. As to expression, detected in brain cortex and hippocampus neurons (at protein level). Expressed in brain with high level in cerebellar cortex, hippocampus and olfactory bulb.

The protein resides in the nucleus. Its subcellular location is the nucleus speckle. It is found in the cytoplasmic granule. In terms of biological role, intrinsically disordered protein that acts as a scaffold, and which is involved in different processes, such as pre-mRNA splicing, transcription regulation, innate immunity and neuron development. Interacts with splicing-related factors via the intrinsically disordered region and regulates alternative splicing of target pre-mRNA species. May suppress the ability of POU3F2 to transactivate the DRD1 gene in a POU3F2 dependent manner. Can activate transcription directly or via association with the transcription machinery. May be involved in ATXN1 mutant-induced cell death. The interaction with ATXN1 mutant reduces levels of phosphorylated RNA polymerase II large subunit. Involved in the assembly of cytoplasmic stress granule, possibly by participating in the transport of neuronal RNA granules. Also acts as an innate immune sensor of infection by retroviruses, by detecting the presence of reverse-transcribed DNA in the cytosol. Directly binds retroviral reverse-transcribed DNA in the cytosol and interacts with CGAS, leading to activate the cGAS-STING signaling pathway, triggering type-I interferon production. This Mus musculus (Mouse) protein is Polyglutamine-binding protein 1 (Pqbp1).